Reading from the N-terminus, the 288-residue chain is Intermediate transcription factor 3 small subunit (288 aa).

It belongs to the orthopoxvirus OPG134 family. Heterodimer of a 45 kDa (A23R) and a 32 kDa (A8R) subunit to form the virus intermediate transcription factor (VITF)-3.

Acts with RNA polymerase to initiate transcription from intermediate gene promoters. This chain is Intermediate transcription factor 3 small subunit (OPG134), found in Homo sapiens (Human).